Here is a 344-residue protein sequence, read N- to C-terminus: Flavonoid 7-O-methyltransferase 1B (344 aa).

An S-adenosyl-L-methionine-binding site is contributed by D211. Residue H249 is the Proton acceptor of the active site.

The protein belongs to the class I-like SAM-binding methyltransferase superfamily. Cation-independent O-methyltransferase family. As to quaternary structure, homodimer.

The catalysed reaction is scutellarein + S-adenosyl-L-methionine = scutellarein 7-methyl ether + S-adenosyl-L-homocysteine. It catalyses the reaction 4',7,8-trihydroxyflavone + S-adenosyl-L-methionine = 4',8-dihydroxy-7-methoxyflavone + S-adenosyl-L-homocysteine. It carries out the reaction isorhamnetin + S-adenosyl-L-methionine = rhamnacene + S-adenosyl-L-homocysteine + H(+). The enzyme catalyses kaempferol + S-adenosyl-L-methionine = kaempferol 7-methyl ether + S-adenosyl-L-homocysteine + H(+). The catalysed reaction is (2S)-naringenin + S-adenosyl-L-methionine = (2S)-sakuranetin + S-adenosyl-L-homocysteine + H(+). It catalyses the reaction quercetin + S-adenosyl-L-methionine = rhamnetin + S-adenosyl-L-homocysteine + H(+). It carries out the reaction apigenin + S-adenosyl-L-methionine = genkwanin + S-adenosyl-L-homocysteine + H(+). The enzyme catalyses luteolin + S-adenosyl-L-methionine = luteolin 7-methyl ether + S-adenosyl-L-homocysteine + H(+). Its pathway is flavonoid metabolism. Functionally, flavonoid 7-O-methyltransferase involved in the biosynthesis of polymethoxylated flavonoids natural products such as pebrellin, aroma compounds which contribute to the flavor of peppermint, and exhibit pharmacological activities such as anti-allergic, anti-oxidant, antibacterial, anti-proliferative, and anti-inflammatory effects. Catalyzes S-adenosylmethionine-dependent regioselective 7-O-methylation of flavonoids; active on various hydroxylated flavonoid substrates, including luteolin (LUT), quercetin, kaempferol, isorhamnetin, apigenin (API), scutellarein (6-hydroxy-apigenin, 6-OH-API, SCU), 7,8,4'-trihydroxy-flavone and naringenin (NAR), and, with a lower efficiency, 7,8,3',4'-tetrahydroxy-flavone, taxifolin and hesperetin. The polypeptide is Flavonoid 7-O-methyltransferase 1B (Mentha piperita (Peppermint)).